Here is a 496-residue protein sequence, read N- to C-terminus: L-arabinose isomerase (496 aa).

Positions 302, 329, 346, and 445 each coordinate Mn(2+).

It belongs to the arabinose isomerase family. The cofactor is Mn(2+).

It catalyses the reaction beta-L-arabinopyranose = L-ribulose. The protein operates within carbohydrate degradation; L-arabinose degradation via L-ribulose; D-xylulose 5-phosphate from L-arabinose (bacterial route): step 1/3. Functionally, catalyzes the conversion of L-arabinose to L-ribulose. This chain is L-arabinose isomerase, found in Thermotoga neapolitana (strain ATCC 49049 / DSM 4359 / NBRC 107923 / NS-E).